A 931-amino-acid chain; its full sequence is MPKARVYELAKELGVDSKTVLSKLEAMGEFVKSASSTVEPPVARKLRNAFASSGQGNASDSKKPGHTAKKPAEPASHSMPKPAAPSAPKPAAPAAPKPRHAASKSDAPKPGHRAPRPGESRQHGNRPNGNAPRPQGGDRRQSGRPTAVPGARPQHGNAPQGGNNANGAKPHTPGPRPGNNPFSRKQGMHTPTPGDIPRPHPMNRPSVNNGEGRRGGRPGQGGGQRGGFRGRPGQGGAKPGQWGQHRPGQGGGQRPAGGGNRFGGNGGGFQGGNSAPSNGPARGGRGRGGAAGAFGRQGGKSSKARKNRLAKRQEFQEMKAPVIGGVRIPTGNGQEVRLRQGASLADLAEKINVNPAALVTVLFHLGEMATATQSLDEATFQILGEEIGWNIKIVSAEEEDKELLQQFDINLDEEELQEDGDLKPRPPVVTVMGHVDHGKTRLLDTIRRTNVIEGEAGGITQRIGAYQVTVNLEGEPRKITFLDTPGHEAFTAMRARGAELTDVAILVVAADDGVMPQTVEAINHAQAAHVPIVVAVNKIDKPGANPDKVRGQLTEYGLVPEEYGGNTMFVDISAKQGTNVDKLLEAVLLTADAELDLRANPDMDARGATVEARLDKGRGAVATVLVQSGTLHIGDAIVAGTSYGRVRAMLDENGNHMQEAGPSTPVQVLGLTSVPTAGDLFLVASDDRTARQIAEKRQATERAAQLAKRRKVVSLESLKEQFAKSEVDMLNIVIKGDSSGSVEALEDSLMKIEVSDEVGIQVIHRGVGAITQNDVNLATVDKAVIIGFNVRPNRQVADLAEREGVEIKYYSIIYKAIEDIEASLKGMLKPEYEEVVTSHSEIREIFRSSKFGNIAGVMVQDGEVKRGTKCRILRNGIATVNDLEISSLRRFKDDVTSVKEGYEAGINLGTFNDIEIGDIIETFEMQEIERK.

The tract at residues 32-310 (KSASSTVEPP…SSKARKNRLA (279 aa)) is disordered. Positions 50–59 (FASSGQGNAS) are enriched in polar residues. Residues 82–96 (PAAPSAPKPAAPAAP) show a composition bias toward pro residues. Over residues 156–168 (GNAPQGGNNANGA) the composition is skewed to low complexity. Composition is skewed to gly residues over residues 217-238 (RPGQGGGQRGGFRGRPGQGGAK), 248-271 (GQGGGQRPAGGGNRFGGNGGGFQG), and 281-298 (ARGGRGRGGAAGAFGRQG). One can recognise a tr-type G domain in the interval 424–596 (PRPPVVTVMG…VLLTADAELD (173 aa)). The segment at 433–440 (GHVDHGKT) is G1. Position 433-440 (433-440 (GHVDHGKT)) interacts with GTP. The segment at 458–462 (GITQR) is G2. Positions 483 to 486 (DTPG) are G3. Residues 483–487 (DTPGH) and 537–540 (NKID) each bind GTP. A G4 region spans residues 537–540 (NKID). A G5 region spans residues 573 to 575 (SAK).

Belongs to the TRAFAC class translation factor GTPase superfamily. Classic translation factor GTPase family. IF-2 subfamily.

It localises to the cytoplasm. Its function is as follows. One of the essential components for the initiation of protein synthesis. Protects formylmethionyl-tRNA from spontaneous hydrolysis and promotes its binding to the 30S ribosomal subunits. Also involved in the hydrolysis of GTP during the formation of the 70S ribosomal complex. The sequence is that of Translation initiation factor IF-2 from Bifidobacterium adolescentis (strain ATCC 15703 / DSM 20083 / NCTC 11814 / E194a).